Here is a 350-residue protein sequence, read N- to C-terminus: Nuclear pore complex-interacting protein family member A1 (350 aa).

The segment at 306 to 325 (KTPPECLLTPLPPSAPPSVD) is disordered.

The protein belongs to the NPIP family. As to quaternary structure, may associate with the nuclear pore complex. In terms of tissue distribution, widely expressed.

It localises to the nucleus. Its subcellular location is the nuclear pore complex. It is found in the nucleus membrane. This chain is Nuclear pore complex-interacting protein family member A1 (NPIPA1), found in Homo sapiens (Human).